The sequence spans 339 residues: Ornithine carbamoyltransferase (339 aa).

Carbamoyl phosphate contacts are provided by residues 56-59, Arg-107, and 134-137; these read STRT and HPTQ. L-ornithine contacts are provided by residues Asn-168, Asp-232, and 236–237; that span reads SM. Residues 274 to 275 and Arg-320 contribute to the carbamoyl phosphate site; that span reads CL.

The protein belongs to the aspartate/ornithine carbamoyltransferase superfamily. OTCase family.

It localises to the cytoplasm. It catalyses the reaction carbamoyl phosphate + L-ornithine = L-citrulline + phosphate + H(+). The protein operates within amino-acid biosynthesis; L-arginine biosynthesis; L-arginine from L-ornithine and carbamoyl phosphate: step 1/3. Its function is as follows. Reversibly catalyzes the transfer of the carbamoyl group from carbamoyl phosphate (CP) to the N(epsilon) atom of ornithine (ORN) to produce L-citrulline. This Buchnera aphidicola subsp. Baizongia pistaciae (strain Bp) protein is Ornithine carbamoyltransferase.